Consider the following 427-residue polypeptide: Gamma-glutamyl phosphate reductase (427 aa).

The protein belongs to the gamma-glutamyl phosphate reductase family.

Its subcellular location is the cytoplasm. It catalyses the reaction L-glutamate 5-semialdehyde + phosphate + NADP(+) = L-glutamyl 5-phosphate + NADPH + H(+). It participates in amino-acid biosynthesis; L-proline biosynthesis; L-glutamate 5-semialdehyde from L-glutamate: step 2/2. In terms of biological role, catalyzes the NADPH-dependent reduction of L-glutamate 5-phosphate into L-glutamate 5-semialdehyde and phosphate. The product spontaneously undergoes cyclization to form 1-pyrroline-5-carboxylate. This chain is Gamma-glutamyl phosphate reductase, found in Brucella anthropi (strain ATCC 49188 / DSM 6882 / CCUG 24695 / JCM 21032 / LMG 3331 / NBRC 15819 / NCTC 12168 / Alc 37) (Ochrobactrum anthropi).